A 596-amino-acid chain; its full sequence is Succinate dehydrogenase flavoprotein subunit (596 aa).

FAD-binding positions include 18 to 23, 41 to 56, and D225; these read GAGGAG and TKLFPTRSHTVAAQGG. Position 49 is a tele-8alpha-FAD histidine (H49). Residues H246 and T258 each contribute to the substrate site. R290 acts as the Proton acceptor in catalysis. H357 is a substrate binding site. E391 serves as a coordination point for FAD. R402 lines the substrate pocket. 407 to 408 is a binding site for FAD; it reads SL.

Belongs to the FAD-dependent oxidoreductase 2 family. FRD/SDH subfamily. As to quaternary structure, part of an enzyme complex containing four subunits: a flavoprotein, an iron-sulfur, cytochrome b-556, and a hydrophobic anchor protein. FAD serves as cofactor.

The protein resides in the cell inner membrane. The catalysed reaction is a quinone + succinate = fumarate + a quinol. It functions in the pathway carbohydrate metabolism; tricarboxylic acid cycle; fumarate from succinate (bacterial route): step 1/1. The chain is Succinate dehydrogenase flavoprotein subunit (sdhA) from Rickettsia conorii (strain ATCC VR-613 / Malish 7).